The following is a 334-amino-acid chain: Putative carboxypeptidase VC_A0337 (334 aa).

The active-site Nucleophile is S112. Active-site charge relay system residues include E234 and H302.

The protein belongs to the peptidase S66 family.

This is Putative carboxypeptidase VC_A0337 from Vibrio cholerae serotype O1 (strain ATCC 39315 / El Tor Inaba N16961).